We begin with the raw amino-acid sequence, 276 residues long: Diaminopimelate epimerase (276 aa).

3 residues coordinate substrate: asparagine 13, glutamine 46, and asparagine 66. Catalysis depends on cysteine 75, which acts as the Proton donor. Substrate contacts are provided by residues 76–77, asparagine 159, asparagine 192, and 210–211; these read GN and ER. Residue cysteine 219 is the Proton acceptor of the active site. 220–221 lines the substrate pocket; the sequence is GT.

It belongs to the diaminopimelate epimerase family. Homodimer.

The protein resides in the cytoplasm. The catalysed reaction is (2S,6S)-2,6-diaminopimelate = meso-2,6-diaminopimelate. It functions in the pathway amino-acid biosynthesis; L-lysine biosynthesis via DAP pathway; DL-2,6-diaminopimelate from LL-2,6-diaminopimelate: step 1/1. Its function is as follows. Catalyzes the stereoinversion of LL-2,6-diaminopimelate (L,L-DAP) to meso-diaminopimelate (meso-DAP), a precursor of L-lysine and an essential component of the bacterial peptidoglycan. The protein is Diaminopimelate epimerase of Pseudoalteromonas translucida (strain TAC 125).